Consider the following 465-residue polypeptide: Cysteine--tRNA ligase (465 aa).

Cys30 is a binding site for Zn(2+). Residues 32–42 carry the 'HIGH' region motif; the sequence is ITVYDYCHVGH. The Zn(2+) site is built by Cys214, His239, and Glu243. A 'KMSKS' region motif is present at residues 271-275; that stretch reads KMSKS. Lys274 contacts ATP.

The protein belongs to the class-I aminoacyl-tRNA synthetase family. As to quaternary structure, monomer. The cofactor is Zn(2+).

It is found in the cytoplasm. The enzyme catalyses tRNA(Cys) + L-cysteine + ATP = L-cysteinyl-tRNA(Cys) + AMP + diphosphate. The chain is Cysteine--tRNA ligase from Burkholderia ambifaria (strain ATCC BAA-244 / DSM 16087 / CCUG 44356 / LMG 19182 / AMMD) (Burkholderia cepacia (strain AMMD)).